We begin with the raw amino-acid sequence, 435 residues long: Arginine/serine-rich coiled-coil protein 2 (435 aa).

Residues methionine 1–serine 27 show a composition bias toward basic and acidic residues. The tract at residues methionine 1–asparagine 230 is disordered. Alanine 2 is modified (N-acetylalanine). Phosphoserine is present on serine 4. Phosphothreonine is present on residues threonine 6 and threonine 16. Serine 17, serine 30, and serine 32 each carry phosphoserine. Over residues alanine 35–lysine 51 the composition is skewed to basic residues. Positions arginine 66–arginine 111 are enriched in basic and acidic residues. Serine 104 is subject to Phosphoserine. Residues histidine 112–serine 214 are compositionally biased toward basic residues. Positions asparagine 230 to alanine 270 form a coiled coil. A Glycyl lysine isopeptide (Lys-Gly) (interchain with G-Cter in SUMO1); alternate cross-link involves residue lysine 376. A Glycyl lysine isopeptide (Lys-Gly) (interchain with G-Cter in SUMO2); alternate cross-link involves residue lysine 376. Serine 377 is subject to Phosphoserine.

Belongs to the RSRC2 family.

In Pongo abelii (Sumatran orangutan), this protein is Arginine/serine-rich coiled-coil protein 2 (RSRC2).